The chain runs to 129 residues: Glycine cleavage system H protein (129 aa).

The 83-residue stretch at 24–106 folds into the Lipoyl-binding domain; the sequence is LVRVGISAFA…HGEGWLLVVR (83 aa). K65 carries the post-translational modification N6-lipoyllysine.

This sequence belongs to the GcvH family. In terms of assembly, the glycine cleavage system is composed of four proteins: P, T, L and H. (R)-lipoate is required as a cofactor.

Its function is as follows. The glycine cleavage system catalyzes the degradation of glycine. The H protein shuttles the methylamine group of glycine from the P protein to the T protein. In Prochlorococcus marinus (strain MIT 9303), this protein is Glycine cleavage system H protein.